Consider the following 2555-residue polypeptide: Ubiquitin carboxyl-terminal hydrolase 9Y (2555 aa).

Residues 1–66 (MTAITHGSPV…APPQHEDEEP (66 aa)) form a disordered region. Over residues 13–45 (NDSQGQVLDGQSQHLFQQNQTSSPDSSNENSVA) the composition is skewed to polar residues. The residue at position 589 (Ser589) is a Phosphoserine. A Phosphothreonine modification is found at Thr591. The tract at residues 972 to 997 (NMPSSPDSSSDSSTASPGNHRNHYND) is disordered. Residues 974–984 (PSSPDSSSDSS) are compositionally biased toward low complexity. Positions 1559–1958 (VGLKNAGATC…NAYILFYEQM (400 aa)) constitute a USP domain. The active-site Nucleophile is Cys1568. The Zn(2+) site is built by Cys1729, His1731, Cys1773, and Cys1776. His1881 (proton acceptor) is an active-site residue. Ser2444 carries the phosphoserine modification. Residues 2476-2485 (PEEEPDDQDA) show a composition bias toward acidic residues. The interval 2476–2555 (PEEEPDDQDA…EVSSPQMKDQ (80 aa)) is disordered. 2 stretches are compositionally biased toward polar residues: residues 2504–2514 (PASQYQQNNHV) and 2528–2555 (NNPQ…MKDQ). A Phosphotyrosine modification is found at Tyr2541. Ser2548 carries the phosphoserine modification.

The protein belongs to the peptidase C19 family. In terms of tissue distribution, widely expressed in embryonic and adult tissues.

It carries out the reaction Thiol-dependent hydrolysis of ester, thioester, amide, peptide and isopeptide bonds formed by the C-terminal Gly of ubiquitin (a 76-residue protein attached to proteins as an intracellular targeting signal).. It functions in the pathway protein modification; protein ubiquitination. Its function is as follows. Deubiquitinase that mediates deubiquitination of target proteins. May stabilize target proteins that are important for male germ cell development. In Homo sapiens (Human), this protein is Ubiquitin carboxyl-terminal hydrolase 9Y.